A 304-amino-acid polypeptide reads, in one-letter code: Protoheme IX farnesyltransferase (304 aa).

A run of 9 helical transmembrane segments spans residues 31 to 51 (VNTL…PDGL), 58 to 78 (VAAT…NCLI), 99 to 119 (LAPA…LTVL), 126 to 146 (LTMW…TVLL), 154 to 174 (IVIG…AVTG), 180 to 200 (ALLL…ALAL), 222 to 242 (FTRL…LLPF), 243 to 263 (ATRM…IGFL), and 284 to 304 (FSIL…YLPL).

It belongs to the UbiA prenyltransferase family. Protoheme IX farnesyltransferase subfamily.

Its subcellular location is the cell inner membrane. It catalyses the reaction heme b + (2E,6E)-farnesyl diphosphate + H2O = Fe(II)-heme o + diphosphate. It participates in porphyrin-containing compound metabolism; heme O biosynthesis; heme O from protoheme: step 1/1. Converts heme B (protoheme IX) to heme O by substitution of the vinyl group on carbon 2 of heme B porphyrin ring with a hydroxyethyl farnesyl side group. The chain is Protoheme IX farnesyltransferase from Aromatoleum aromaticum (strain DSM 19018 / LMG 30748 / EbN1) (Azoarcus sp. (strain EbN1)).